The following is a 390-amino-acid chain: Queuine tRNA-ribosyltransferase (390 aa).

Residue D92 is the Proton acceptor of the active site. Substrate contacts are provided by residues 92–96 (DSGGF), D146, Q195, and G222. An RNA binding region spans residues 253–259 (GVGTPED). The active-site Nucleophile is D272. The tract at residues 277–281 (TRNAR) is RNA binding; important for wobble base 34 recognition. Zn(2+) contacts are provided by C310, C312, C315, and H354.

Belongs to the queuine tRNA-ribosyltransferase family. As to quaternary structure, homodimer. Within each dimer, one monomer is responsible for RNA recognition and catalysis, while the other monomer binds to the replacement base PreQ1. It depends on Zn(2+) as a cofactor.

The enzyme catalyses 7-aminomethyl-7-carbaguanine + guanosine(34) in tRNA = 7-aminomethyl-7-carbaguanosine(34) in tRNA + guanine. Its pathway is tRNA modification; tRNA-queuosine biosynthesis. In terms of biological role, catalyzes the base-exchange of a guanine (G) residue with the queuine precursor 7-aminomethyl-7-deazaguanine (PreQ1) at position 34 (anticodon wobble position) in tRNAs with GU(N) anticodons (tRNA-Asp, -Asn, -His and -Tyr). Catalysis occurs through a double-displacement mechanism. The nucleophile active site attacks the C1' of nucleotide 34 to detach the guanine base from the RNA, forming a covalent enzyme-RNA intermediate. The proton acceptor active site deprotonates the incoming PreQ1, allowing a nucleophilic attack on the C1' of the ribose to form the product. After dissociation, two additional enzymatic reactions on the tRNA convert PreQ1 to queuine (Q), resulting in the hypermodified nucleoside queuosine (7-(((4,5-cis-dihydroxy-2-cyclopenten-1-yl)amino)methyl)-7-deazaguanosine). In Delftia acidovorans (strain DSM 14801 / SPH-1), this protein is Queuine tRNA-ribosyltransferase.